Here is a 197-residue protein sequence, read N- to C-terminus: Phosphoheptose isomerase (197 aa).

Residues Met34 to Gln196 enclose the SIS domain. Asn49–Gly51 serves as a coordination point for substrate. Zn(2+)-binding residues include His58 and Glu62. Substrate contacts are provided by residues Glu62, Asn91–Asp92, Ser117–Ser119, Ser122, and Gln172. Residues Gln172 and His180 each coordinate Zn(2+).

It belongs to the SIS family. GmhA subfamily. Homotetramer. Requires Zn(2+) as cofactor.

It localises to the cytoplasm. It carries out the reaction 2 D-sedoheptulose 7-phosphate = D-glycero-alpha-D-manno-heptose 7-phosphate + D-glycero-beta-D-manno-heptose 7-phosphate. It functions in the pathway carbohydrate biosynthesis; D-glycero-D-manno-heptose 7-phosphate biosynthesis; D-glycero-alpha-D-manno-heptose 7-phosphate and D-glycero-beta-D-manno-heptose 7-phosphate from sedoheptulose 7-phosphate: step 1/1. Catalyzes the isomerization of sedoheptulose 7-phosphate in D-glycero-D-manno-heptose 7-phosphate. This is Phosphoheptose isomerase from Shewanella piezotolerans (strain WP3 / JCM 13877).